The following is a 363-amino-acid chain: Chorismate synthase (363 aa).

Arg48 contributes to the NADP(+) binding site. FMN contacts are provided by residues Arg125–Ser127, Asn238–Ala239, Gly278, Lys293–Ser297, and Arg319.

It belongs to the chorismate synthase family. In terms of assembly, homotetramer. The cofactor is FMNH2.

The catalysed reaction is 5-O-(1-carboxyvinyl)-3-phosphoshikimate = chorismate + phosphate. Its pathway is metabolic intermediate biosynthesis; chorismate biosynthesis; chorismate from D-erythrose 4-phosphate and phosphoenolpyruvate: step 7/7. Functionally, catalyzes the anti-1,4-elimination of the C-3 phosphate and the C-6 proR hydrogen from 5-enolpyruvylshikimate-3-phosphate (EPSP) to yield chorismate, which is the branch point compound that serves as the starting substrate for the three terminal pathways of aromatic amino acid biosynthesis. This reaction introduces a second double bond into the aromatic ring system. The chain is Chorismate synthase from Acinetobacter baumannii (strain SDF).